We begin with the raw amino-acid sequence, 882 residues long: Translation initiation factor IF-2 (882 aa).

Positions 28–294 (GIRKSADDSV…SSLQQGFQKP (267 aa)) are disordered. Polar residues predominate over residues 67–81 (STLNIPGTGGKSKSV). Residues 92–209 (VKRDPQEAER…RMAEENKWTD (118 aa)) show a composition bias toward basic and acidic residues. The segment covering 244–258 (GRGRNAKAARPKKGN) has biased composition (basic residues). Residues 259 to 272 (KHAESKADREEARA) are compositionally biased toward basic and acidic residues. Positions 381–550 (PRAPVVTIMG…LLQAEVLELK (170 aa)) constitute a tr-type G domain. The tract at residues 390–397 (GHVDHGKT) is G1. 390-397 (GHVDHGKT) contributes to the GTP binding site. The segment at 415–419 (GITQH) is G2. Residues 436-439 (DTPG) are G3. Residues 436–440 (DTPGH) and 490–493 (NKID) each bind GTP. A G4 region spans residues 490–493 (NKID). The tract at residues 526–528 (SAK) is G5. An N6-acetyllysine modification is found at lysine 800.

It belongs to the TRAFAC class translation factor GTPase superfamily. Classic translation factor GTPase family. IF-2 subfamily.

It localises to the cytoplasm. Its function is as follows. One of the essential components for the initiation of protein synthesis. Protects formylmethionyl-tRNA from spontaneous hydrolysis and promotes its binding to the 30S ribosomal subunits. Also involved in the hydrolysis of GTP during the formation of the 70S ribosomal complex. This Shigella flexneri serotype 5b (strain 8401) protein is Translation initiation factor IF-2.